Consider the following 173-residue polypeptide: Placenta-specific protein 1 (173 aa).

The signal sequence occupies residues 1-23 (MNLRKFLGGTVLVAFMLFSYSEQ).

It belongs to the PLAC1 family. As to expression, expressed in placenta.

The protein resides in the secreted. In terms of biological role, may play a role in placental development. The protein is Placenta-specific protein 1 of Mus musculus (Mouse).